The sequence spans 274 residues: DNA repair protein Rad1 (274 aa).

Belongs to the rad1 family. Component of the 9-1-1 checkpoint clamp complex consisting of Rad9 isoform A, Rad1 and Hus1-like; the interaction with Hus1-like is direct. Does not interact directly with Rad9; this interaction is probably mediated by Hus1-like. This complex probably also forms with Rad9 isoform B, however 9-1-1 complex containing Rad9 isoform A localizes to the nuclear periphery. As to expression, expressed in ovary.

It localises to the cytoplasm. The protein resides in the nucleus. The protein localises to the nucleus envelope. The protein is DNA repair protein Rad1 of Drosophila melanogaster (Fruit fly).